The following is a 676-amino-acid chain: Serine/threonine-protein kinase Haspin homolog ALK2 (676 aa).

A disordered region spans residues 53–93 (HKGSAEDESQSFFTSSDSPTSKTRPVGKTIENDDYYGKRSS). Residues 62-75 (QSFFTSSDSPTSKT) show a composition bias toward polar residues. Residues 116-118 (KEN) carry the KEN box motif. The D box signature appears at 150–158 (RTPLRPISN). Residues 228 to 312 (SSRSVNDQDP…HKTSHSSLNK (85 aa)) form a disordered region. The span at 232-259 (VNDQDPNFVQPKPTNSLQKKSSISSFHN) shows a compositional bias: polar residues. The 290-residue stretch at 383–672 (LCDVKYILHD…TCGDLLSLKG (290 aa)) folds into the Protein kinase domain. Residues 389-397 (ILHDLREAQ) and K430 contribute to the ATP site.

This sequence belongs to the protein kinase superfamily. Ser/Thr protein kinase family. Haspin subfamily. Post-translationally, periodically phosphorylated during the cell cycle with a phosphorylation peak during mitosis and hyperphosphorylated after DNA damage.

It carries out the reaction L-seryl-[protein] + ATP = O-phospho-L-seryl-[protein] + ADP + H(+). The catalysed reaction is L-threonyl-[protein] + ATP = O-phospho-L-threonyl-[protein] + ADP + H(+). Its function is as follows. Serine/threonine haspin-like protein kinase involved in cell cycle regulation. In Saccharomyces cerevisiae (strain ATCC 204508 / S288c) (Baker's yeast), this protein is Serine/threonine-protein kinase Haspin homolog ALK2 (ALK2).